Here is a 721-residue protein sequence, read N- to C-terminus: MDSSFKRASFKLPPGVNIDNINEMNNNNMNTAPAPAPAPIPTPQPTTTTTTAPQRKVTFGSRVRAQEINATPTPTTPAPAPTTTPSENDTAKKDDFDFDPVPVSRPRATRAATMIPSNMLGDKRPIRPLGKGFIGADRQTPKPETDNNNNGNNNNNNNNNDNNNNNNNNDDDDEDEDDDEYSNVSAPSWNSVLSKAKTNTMNSRKRSGMIHDFVDVNIKNDSGGENSANTTSEDGSSSRRGTLRKAIVIGTHNPQPQQEDDVEETTSRISSLDLANVQRPRPQYHTIDPASIPQWKKNNEDLVNTMEQQQQQPQQPQQPQQQQSTVGGLFNSILKKQPNNNANNAQRLTRAEAEYNEYLTKSKSQRFPEIEALNFIYPAGKDNLGRTIIVIIASHLPVREMDMERVLLYTISIMDPVVEEEYVLVYVHTNMNNSNKPSMAWMKKVYTIFNRKYKKNLKGLYIVHPTTWIKFTLGIFKHFLSSKFWKKLTYIDDLGELFKTFPREQLALPNAIMMHRPAGKKSQPIFGAPLEDVINRPDNPGEIPVLFEKGIAYLSRRGLQVEGLFRLSGANSQIKSLRQGFDQGEDVDLEDVEDVHTVAGLLKLYLRELPSPLFPFDLYSSFIEISKGEQTKPQKVESLKLLLSLLPPANKALSKHLFKFLGKVIENSSVNKMNSVNLSIVFAPNLLKDKEGNVMDAVADAQFVNQVVQLILDNINILFNY.

The tract at residues Met-1–Thr-325 is disordered. Positions Asn-17 to Pro-33 are enriched in low complexity. Pro residues predominate over residues Ala-34–Gln-44. Residues Asp-146–Asn-168 are compositionally biased toward low complexity. Positions Asn-169 to Tyr-181 are enriched in acidic residues. Composition is skewed to polar residues over residues Ser-182–Asn-202 and Lys-219–Arg-240. Over residues Gln-308 to Gln-323 the composition is skewed to low complexity. Residues Lys-363–Lys-520 enclose the CRAL-TRIO domain. In terms of domain architecture, Rho-GAP spans Ala-528–Phe-719.

It is found in the cytoplasm. Functionally, rho GTPase-activating protein involved in the signal transduction pathway. This is Rho GTPase-activating protein gacY (gacY) from Dictyostelium discoideum (Social amoeba).